A 96-amino-acid polypeptide reads, in one-letter code: Putative protein p29 (96 aa).

This chain is Putative protein p29 (29), found in Acyrthosiphon pisum secondary endosymbiont phage 1 (Bacteriophage APSE-1).